A 375-amino-acid chain; its full sequence is Alcohol dehydrogenase 1C (375 aa).

An N-acetylserine modification is found at serine 2. The residue at position 23 (serine 23) is a Phosphoserine. Positions 47, 68, 98, 101, 104, 112, and 175 each coordinate Zn(2+). NAD(+)-binding positions include 200-205, aspartate 224, lysine 229, isoleucine 270, 293-295, 318-320, and arginine 370; these read GLGGVG, VGV, and AIF.

It belongs to the zinc-containing alcohol dehydrogenase family. In terms of assembly, dimer of identical or non-identical chains of class I alcohol dehydrogenase: ADH1A, ADH1B, and ADH1C. Requires Zn(2+) as cofactor. As to expression, expressed in kidney.

The protein localises to the cytoplasm. The catalysed reaction is a primary alcohol + NAD(+) = an aldehyde + NADH + H(+). It carries out the reaction ethanol + NAD(+) = acetaldehyde + NADH + H(+). In terms of biological role, alcohol dehydrogenase. Exhibits high activity for ethanol oxidation and plays a major role in ethanol catabolism. This chain is Alcohol dehydrogenase 1C (ADH1C), found in Papio hamadryas (Hamadryas baboon).